Consider the following 643-residue polypeptide: Sodium/iodide cotransporter (643 aa).

The Extracellular portion of the chain corresponds to 1–14; sequence MEAVETGERPTFGA. Residues 15–31 form a helical membrane-spanning segment; it reads WDYGVFALMLLVSTGIG. The Cytoplasmic portion of the chain corresponds to 32–56; that stretch reads LWVGLARGGQRSAEDFFTGGRRLAA. Residues 57–80 form a discontinuously helical membrane-spanning segment; it reads LPVGLSLSASFMSAVQVLGVPSEA. Na(+) is bound by residues serine 69, valine 71, and glutamine 72. An iodide-binding site is contributed by valine 76. Topologically, residues 81–84 are extracellular; the sequence is YRYG. The chain crosses the membrane as a helical span at residues 85 to 105; the sequence is LKFLWMCLGQLLNSVLTALLF. An iodide-binding site is contributed by methionine 90. The Cytoplasmic segment spans residues 106 to 130; sequence MPVFYRLGLTSTYEYLEMRFSRAVR. The chain crosses the membrane as a helical span at residues 131–157; sequence LCGTLQYIVATMLYTGIVIYAPALILN. Tyrosine 144 contributes to the Na(+) binding site. The Extracellular segment spans residues 158 to 163; sequence QVTGLD. The chain crosses the membrane as a helical span at residues 164-181; sequence IWASLLSTGIICTFYTAV. The Cytoplasmic portion of the chain corresponds to 182–189; it reads GGMKAVVW. Residues 190-208 form a helical membrane-spanning segment; that stretch reads TDVFQVVVMLSGFWVVLAR. The Extracellular portion of the chain corresponds to 209-243; that stretch reads GVMLVGGPRQVLTLAQNHSRINLMDFNPDPRSRYT. A discontinuously helical membrane pass occupies residues 244–266; that stretch reads FWTFVVGGTLVWLSMYGVNQAQV. Iodide is bound at residue tryptophan 255. Na(+) is bound at residue methionine 258. The Cytoplasmic segment spans residues 267–278; it reads QRYVACRTEKQA. The helical transmembrane segment at 279-301 threads the bilayer; the sequence is KLALLINQVGLFLIVSSAACCGI. Topologically, residues 302 to 335 are extracellular; the sequence is VMFVFYTDCDPLLLGRISAPDQYMPLLVLDIFED. The chain crosses the membrane as a helical span at residues 336-363; it reads LPGVPGLFLACAYSGTLSTASTSINAMA. Topologically, residues 364–386 are cytoplasmic; the sequence is AVTVEDLIKPRLRSLAPRKLVII. Residues 387-408 traverse the membrane as a helical segment; that stretch reads SKGLSLIYGSACLTVAALSSLL. The Extracellular segment spans residues 409–411; sequence GGG. The chain crosses the membrane as a helical span at residues 412–437; that stretch reads VLQGSFTVMGVISGPLLGAFILGMFL. Residue leucine 413 coordinates iodide. Serine 416 and phenylalanine 417 together coordinate Na(+). Position 417 (phenylalanine 417) interacts with iodide. The Cytoplasmic portion of the chain corresponds to 438–441; that stretch reads PACN. The helical transmembrane segment at 442–465 threads the bilayer; that stretch reads TPGVLAGLGAGLALSLWVALGATL. Residues 466–525 lie on the Extracellular side of the membrane; the sequence is YPPSEQTMRVLPSSAARCVALSVNASGLLDPALLPANDSSRAPSSGMDASRPALADSFYA. N-linked (GlcNAc...) asparagine glycosylation is found at asparagine 489 and asparagine 502. The helical transmembrane segment at 526-550 threads the bilayer; it reads ISYLYYGALGTLTTVLCGALISCLT. Residues 551–643 are Cytoplasmic-facing; that stretch reads GPTKRSTLAP…GGRDQQETNL (93 aa). The residue at position 556 (serine 556) is a Phosphoserine; by PKA. The tract at residues 623–643 is disordered; the sequence is AGSWTPCVGHDGGRDQQETNL. Residues 633–643 are compositionally biased toward basic and acidic residues; it reads DGGRDQQETNL.

It belongs to the sodium:solute symporter (SSF) (TC 2.A.21) family. Monomer. Post-translationally, glycosylated. Expression is primarily in thyroid tissue, but also to a lower extent in mammary gland and ovary. Expression is reduced in tumors.

It localises to the cell membrane. Its subcellular location is the cytoplasm. The enzyme catalyses iodide(out) + 2 Na(+)(out) = iodide(in) + 2 Na(+)(in). It carries out the reaction chlorate(out) + 2 Na(+)(out) = chlorate(in) + 2 Na(+)(in). It catalyses the reaction thiocyanate(out) + 2 Na(+)(out) = thiocyanate(in) + 2 Na(+)(in). The catalysed reaction is nitrate(out) + 2 Na(+)(out) = nitrate(in) + 2 Na(+)(in). The enzyme catalyses selenocyanate(out) + 2 Na(+)(out) = selenocyanate(in) + 2 Na(+)(in). With respect to regulation, dysidenin and perchlorate inhibit iodide transport activity. Oxyanions inhibit iodide transport activity by blocking the binding sites for iodide and one of the sodium ions. Functionally, sodium:iodide symporter that mediates the transport of iodide into the thyroid gland. Can also mediate the transport of chlorate, thiocynate, nitrate and selenocynate. The chain is Sodium/iodide cotransporter (SLC5A5) from Homo sapiens (Human).